We begin with the raw amino-acid sequence, 353 residues long: Rhodopsin (353 aa).

Over 1-36 (MNGTEGPYFYIPMVNTTGIVRSPYEYPQYYLVNPAA) the chain is Extracellular. N-linked (GlcNAc...) asparagine glycosylation is found at Asn-2 and Asn-15. Residues 37–61 (YAALGAYMFLLILVGFPVNFLTLYV) form a helical membrane-spanning segment. At 62–73 (TLEHKKLRTPLN) the chain is on the cytoplasmic side. Residues 74–96 (YILLNLAVADLFMVLGGFTTTMY) form a helical membrane-spanning segment. Residues 97–110 (TSMHGYFVLGRLGC) lie on the Extracellular side of the membrane. Cys-110 and Cys-187 are oxidised to a cystine. Residues 111–133 (NVEGFFATLGGEIALWSLVVLAI) traverse the membrane as a helical segment. The short motif at 134–136 (ERW) is the 'Ionic lock' involved in activated form stabilization element. Residues 134–152 (ERWVVVCKPISNFRFSEDH) lie on the Cytoplasmic side of the membrane. Residues 153–173 (AIMGLAFTWVMASACAVPPLV) form a helical membrane-spanning segment. The Extracellular portion of the chain corresponds to 174 to 202 (GWSRYIPEGMQCSCGIDYYTRAEGFNNES). N-linked (GlcNAc...) asparagine glycosylation occurs at Asn-200. The chain crosses the membrane as a helical span at residues 203–224 (FVIYMFVCHFLIPLVVVFFCYG). Residues 225 to 252 (RLLCAVKEAAAAQQESETTQRAEREVSR) lie on the Cytoplasmic side of the membrane. Residues 253–274 (MVVIMVVAFLVCWCPYAGVAWY) traverse the membrane as a helical segment. Over 275 to 286 (IFTHQGSEFGPL) the chain is Extracellular. The helical transmembrane segment at 287–308 (FMTFPAFFAKSSSIYNPMIYIC) threads the bilayer. At Lys-296 the chain carries N6-(retinylidene)lysine. At 309–353 (MNKQFRHCMITTLCCGKNPFEEEEGASTTSKTEASSVSSSSVSPA) the chain is on the cytoplasmic side. Residues Cys-322 and Cys-323 are each lipidated (S-palmitoyl cysteine). Residues 330–353 (EEEGASTTSKTEASSVSSSSVSPA) are disordered. A compositionally biased stretch (low complexity) spans 334–353 (ASTTSKTEASSVSSSSVSPA).

Belongs to the G-protein coupled receptor 1 family. Opsin subfamily. Phosphorylated on some or all of the serine and threonine residues present in the C-terminal region. In terms of processing, contains one covalently linked retinal chromophore.

It localises to the membrane. The protein resides in the cell projection. It is found in the cilium. The protein localises to the photoreceptor outer segment. In terms of biological role, photoreceptor required for image-forming vision at low light intensity. While most salt water fish species use retinal as chromophore, most freshwater fish use 3-dehydroretinal, or a mixture of retinal and 3-dehydroretinal. Light-induced isomerization of 11-cis to all-trans retinal triggers a conformational change that activates signaling via G-proteins. Subsequent receptor phosphorylation mediates displacement of the bound G-protein alpha subunit by arrestin and terminates signaling. In Chelon labrosus (Thicklip grey mullet), this protein is Rhodopsin (rho).